Here is a 427-residue protein sequence, read N- to C-terminus: Enolase (427 aa).

Residue Gln-163 participates in (2R)-2-phosphoglycerate binding. The active-site Proton donor is Glu-205. Mg(2+)-binding residues include Asp-242, Glu-285, and Asp-312. Residues Lys-337, Arg-366, Ser-367, and Lys-388 each coordinate (2R)-2-phosphoglycerate. Lys-337 (proton acceptor) is an active-site residue.

This sequence belongs to the enolase family. Mg(2+) is required as a cofactor.

The protein localises to the cytoplasm. It localises to the secreted. Its subcellular location is the cell surface. The enzyme catalyses (2R)-2-phosphoglycerate = phosphoenolpyruvate + H2O. Its pathway is carbohydrate degradation; glycolysis; pyruvate from D-glyceraldehyde 3-phosphate: step 4/5. Functionally, catalyzes the reversible conversion of 2-phosphoglycerate (2-PG) into phosphoenolpyruvate (PEP). It is essential for the degradation of carbohydrates via glycolysis. The protein is Enolase of Nitrobacter hamburgensis (strain DSM 10229 / NCIMB 13809 / X14).